Consider the following 200-residue polypeptide: Adenine phosphoribosyltransferase (200 aa).

This sequence belongs to the purine/pyrimidine phosphoribosyltransferase family. Homodimer.

The protein localises to the cytoplasm. It carries out the reaction AMP + diphosphate = 5-phospho-alpha-D-ribose 1-diphosphate + adenine. It participates in purine metabolism; AMP biosynthesis via salvage pathway; AMP from adenine: step 1/1. Its function is as follows. Catalyzes a salvage reaction resulting in the formation of AMP, that is energically less costly than de novo synthesis. In Sorangium cellulosum (strain So ce56) (Polyangium cellulosum (strain So ce56)), this protein is Adenine phosphoribosyltransferase.